The chain runs to 529 residues: Glucose-6-phosphate isomerase (529 aa).

Residue E323 is the Proton donor of the active site. Residues H352 and K456 contribute to the active site.

This sequence belongs to the GPI family.

The protein resides in the cytoplasm. The catalysed reaction is alpha-D-glucose 6-phosphate = beta-D-fructose 6-phosphate. Its pathway is carbohydrate biosynthesis; gluconeogenesis. It participates in carbohydrate degradation; glycolysis; D-glyceraldehyde 3-phosphate and glycerone phosphate from D-glucose: step 2/4. Its function is as follows. Catalyzes the reversible isomerization of glucose-6-phosphate to fructose-6-phosphate. The chain is Glucose-6-phosphate isomerase from Geobacter sulfurreducens (strain ATCC 51573 / DSM 12127 / PCA).